Here is a 229-residue protein sequence, read N- to C-terminus: Potassium/proton antiporter CemA (229 aa).

4 helical membrane-spanning segments follow: residues 7–27, 114–134, 154–174, and 189–209; these read LIPLLYLASIVFLPWWISLSF, IICFVILSSYSILGNEELVIL, ILLLTDLCIGFHSPHGWELMI, and IISGLVSTFPVILDTILKYWI.

It belongs to the CemA family.

The protein resides in the plastid. It is found in the chloroplast inner membrane. The enzyme catalyses K(+)(in) + H(+)(out) = K(+)(out) + H(+)(in). Contributes to K(+)/H(+) antiport activity by supporting proton efflux to control proton extrusion and homeostasis in chloroplasts in a light-dependent manner to modulate photosynthesis. Prevents excessive induction of non-photochemical quenching (NPQ) under continuous-light conditions. Indirectly promotes efficient inorganic carbon uptake into chloroplasts. This Fagus sylvatica (Beechnut) protein is Potassium/proton antiporter CemA.